A 1120-amino-acid polypeptide reads, in one-letter code: Transcriptional repressor NF-X1 (1120 aa).

The interval 9 to 26 (GTFKFNTDAAEFIPQEKK) is interaction with PABPC1 and PABC4. Positions 22–295 (PQEKKNSGLN…LNERPAKSTC (274 aa)) are disordered. 3 positions are modified to phosphoserine: serine 50, serine 82, and serine 95. Residues 73-106 (YHPSGSKPKSQQTSFQSSPCNKSPKSHGLQNQPW) show a composition bias toward polar residues. Residues 111–120 (NEKHHIRVKK) show a composition bias toward basic residues. The span at 124-141 (LAEQTSDTAGLESSTRSE) shows a compositional bias: polar residues. Phosphoserine occurs at positions 129 and 150. Basic and acidic residues-rich tracts occupy residues 142 to 159 (SGTDLREHSPSESEKEVV), 188 to 202 (LKCEWSNRTTPKPED), 222 to 254 (SSRKGVLDGYGARRNEQRRYPQKRPPWEVEGAR), and 282 to 291 (PKDDLNERPA). Serine 326 carries the post-translational modification Phosphoserine. The RING-type; atypical zinc-finger motif lies at 358–409 (CMVCCELVRVTAPVWSCQSCYHVFHLNCIKKWARSPASQADGQSGWRCPACQ). 8 NF-X1-type zinc fingers span residues 453 to 471 (CPHSCNLLCHPGPCPPCPA), 506 to 525 (CGQHQCAELCHGGQCQPCQI), 567 to 586 (CGNHTCSQVCHPQPCQQCPR), 632 to 655 (CGSLDFIHTCEKLCHEGDCGPCSR), 694 to 713 (CGRHKCNEICCVDKEHKCPL), 721 to 740 (CGLHRCEEPCHRGNCQTCWQ), 832 to 854 (CGMHKCQRLCHKGECLVDEPCKQ), and 863 to 884 (CGHPCMAPCHTSSPCPVTACKA). The R3H domain occupies 994–1062 (LKFVSDVEKE…KRNVVVTAIR (69 aa)). Residues 1081 to 1109 (QARPPPPIPHHRHQSDKNPGSSNLQKITK) are disordered. Polar residues predominate over residues 1097–1106 (KNPGSSNLQK).

This sequence belongs to the NFX1 family. As to quaternary structure, isoform 1 interacts with PABPC1 and PABPC4. In terms of assembly, (Microbial infection) Isoform 1 and isoform 3 interact with human papillomavirus (HPV) type-16 E6 oncoprotein. In terms of processing, isoform 3 is polyubiquitinated in the presence of HPV16 E6 protein; which leads to proteasomal degradation. Isoform 1 is not polyubiquitinated.

It localises to the nucleus. In terms of biological role, binds to the X-box motif of MHC class II genes and represses their expression. May play an important role in regulating the duration of an inflammatory response by limiting the period in which MHC class II molecules are induced by interferon-gamma. Isoform 3 binds to the X-box motif of TERT promoter and represses its expression. Together with PABPC1 or PABPC4, isoform 1 acts as a coactivator for TERT expression. Mediates E2-dependent ubiquitination. The chain is Transcriptional repressor NF-X1 (NFX1) from Homo sapiens (Human).